The chain runs to 444 residues: Glutamyl-tRNA reductase (444 aa).

Substrate contacts are provided by residues 49–52 (TCNR), serine 109, 114–116 (ETQ), and glutamine 120. Cysteine 50 serves as the catalytic Nucleophile. An NADP(+)-binding site is contributed by 189-194 (GAGKMG).

Belongs to the glutamyl-tRNA reductase family. As to quaternary structure, homodimer.

The catalysed reaction is (S)-4-amino-5-oxopentanoate + tRNA(Glu) + NADP(+) = L-glutamyl-tRNA(Glu) + NADPH + H(+). It participates in porphyrin-containing compound metabolism; protoporphyrin-IX biosynthesis; 5-aminolevulinate from L-glutamyl-tRNA(Glu): step 1/2. Its function is as follows. Catalyzes the NADPH-dependent reduction of glutamyl-tRNA(Glu) to glutamate 1-semialdehyde (GSA). This chain is Glutamyl-tRNA reductase, found in Bacillus cereus (strain 03BB102).